The chain runs to 117 residues: MADQITSATATAKTVRIAARKARLVIDLIRGRDVAEALAILEFTPRSGSPIIEKVLKSAIANAEHNYDLDAQNLYVSKAYVNEGPTLKRFRPRAKGSASPINKRTSHVTVVVSEKEA.

The protein belongs to the universal ribosomal protein uL22 family. Part of the 50S ribosomal subunit.

This protein binds specifically to 23S rRNA; its binding is stimulated by other ribosomal proteins, e.g. L4, L17, and L20. It is important during the early stages of 50S assembly. It makes multiple contacts with different domains of the 23S rRNA in the assembled 50S subunit and ribosome. Its function is as follows. The globular domain of the protein is located near the polypeptide exit tunnel on the outside of the subunit, while an extended beta-hairpin is found that lines the wall of the exit tunnel in the center of the 70S ribosome. This Lacticaseibacillus casei (strain BL23) (Lactobacillus casei) protein is Large ribosomal subunit protein uL22.